A 480-amino-acid polypeptide reads, in one-letter code: Ribulose bisphosphate carboxylase large chain (480 aa).

The propeptide occupies 1 to 2 (MS). Residue P3 is modified to N-acetylproline. K14 is modified (N6,N6,N6-trimethyllysine). The substrate site is built by N123 and T173. The active-site Proton acceptor is the K175. Substrate is bound at residue K177. Mg(2+)-binding residues include K201, D203, and E204. K201 bears the N6-carboxylysine mark. Catalysis depends on H294, which acts as the Proton acceptor. The substrate site is built by R295, H327, and S379.

The protein belongs to the RuBisCO large chain family. Type I subfamily. As to quaternary structure, heterohexadecamer of 8 large chains and 8 small chains; disulfide-linked. The disulfide link is formed within the large subunit homodimers. It depends on Mg(2+) as a cofactor. The disulfide bond which can form in the large chain dimeric partners within the hexadecamer appears to be associated with oxidative stress and protein turnover.

It is found in the plastid. Its subcellular location is the chloroplast. It catalyses the reaction 2 (2R)-3-phosphoglycerate + 2 H(+) = D-ribulose 1,5-bisphosphate + CO2 + H2O. It carries out the reaction D-ribulose 1,5-bisphosphate + O2 = 2-phosphoglycolate + (2R)-3-phosphoglycerate + 2 H(+). In terms of biological role, ruBisCO catalyzes two reactions: the carboxylation of D-ribulose 1,5-bisphosphate, the primary event in carbon dioxide fixation, as well as the oxidative fragmentation of the pentose substrate in the photorespiration process. Both reactions occur simultaneously and in competition at the same active site. The chain is Ribulose bisphosphate carboxylase large chain from Mollugo verticillata (Green carpetweed).